A 268-amino-acid polypeptide reads, in one-letter code: Shikimate dehydrogenase (NADP(+)) (268 aa).

Shikimate-binding positions include 15-17 (SKS) and threonine 60. Lysine 64 acts as the Proton acceptor in catalysis. Asparagine 85 and aspartate 101 together coordinate shikimate. Residues 121–125 (GAGGS) and leucine 208 each bind NADP(+). A shikimate-binding site is contributed by tyrosine 210. An NADP(+)-binding site is contributed by glycine 230.

Belongs to the shikimate dehydrogenase family. Homodimer.

It carries out the reaction shikimate + NADP(+) = 3-dehydroshikimate + NADPH + H(+). Its pathway is metabolic intermediate biosynthesis; chorismate biosynthesis; chorismate from D-erythrose 4-phosphate and phosphoenolpyruvate: step 4/7. In terms of biological role, involved in the biosynthesis of the chorismate, which leads to the biosynthesis of aromatic amino acids. Catalyzes the reversible NADPH linked reduction of 3-dehydroshikimate (DHSA) to yield shikimate (SA). The protein is Shikimate dehydrogenase (NADP(+)) of Helicobacter hepaticus (strain ATCC 51449 / 3B1).